The primary structure comprises 188 residues: Elongation factor P (188 aa).

It belongs to the elongation factor P family.

The protein localises to the cytoplasm. It functions in the pathway protein biosynthesis; polypeptide chain elongation. Involved in peptide bond synthesis. Stimulates efficient translation and peptide-bond synthesis on native or reconstituted 70S ribosomes in vitro. Probably functions indirectly by altering the affinity of the ribosome for aminoacyl-tRNA, thus increasing their reactivity as acceptors for peptidyl transferase. The sequence is that of Elongation factor P from Rickettsia massiliae (strain Mtu5).